The chain runs to 419 residues: POU domain, class 4, transcription factor 1 (419 aa).

Positions 57 to 66 match the POU-IV box motif; that stretch reads RAEALAAVDI. 2 disordered regions span residues 94-117 and 131-197; these read STVP…GDLL and AGGA…HSLG. Over residues 99-108 the composition is skewed to basic residues; the sequence is AHHHHHHHHH. The segment covering 131–184 has biased composition (gly residues); the sequence is AGGAGAAAGGGGAHDGPGGGGGPGGGGGPGGGPGGGGGGGPGGGGGGPGGGLLG. Residues 261 to 338 enclose the POU-specific domain; sequence SDTDPRELEA…LQAWLEEAEG (78 aa). Residues 356-415 constitute a DNA-binding region (homeobox); it reads KRKRTSIAAPEKRSLEAYFAVQPRPSSEKIAAIAEKLDLKKNVVRVWFCNQRQKQKRMKF.

It belongs to the POU transcription factor family. Class-4 subfamily. As to quaternary structure, interacts (via N-terminus) with RIT2; the interaction controls POU4F1 transactivation activity on some neuronal target genes. Isoform 1 interacts with POU4F2; this interaction inhibits both POU4F1 DNA-binding and transcriptional activities. Isoform 1 interacts (C-terminus) with ESR1 (via DNA-binding domain); this interaction decreases the estrogen receptor ESR1 transcriptional activity in a DNA- and ligand 17-beta-estradiol-independent manner. Expressed in the brain and the retina. Present in the developing brain, spinal cord and eye.

Its subcellular location is the nucleus. It is found in the cytoplasm. Its function is as follows. Multifunctional transcription factor with different regions mediating its different effects. Acts by binding (via its C-terminal domain) to sequences related to the consensus octamer motif 5'-ATGCAAAT-3' in the regulatory regions of its target genes. Regulates the expression of specific genes involved in differentiation and survival within a subset of neuronal lineages. It has been shown that activation of some of these genes requires its N-terminal domain, maybe through a neuronal-specific cofactor. Activates BCL2 expression and protects neuronal cells from apoptosis (via the N-terminal domain). Induces neuronal process outgrowth and the coordinate expression of genes encoding synaptic proteins. Exerts its major developmental effects in somatosensory neurons and in brainstem nuclei involved in motor control. Stimulates the binding affinity of the nuclear estrogene receptor ESR1 to DNA estrogen response element (ERE), and hence modulates ESR1-induced transcriptional activity. May positively regulate POU4F2 and POU4F3. Regulates dorsal root ganglion sensory neuron specification and axonal projection into the spinal cord. Plays a role in TNFSF11-mediated terminal osteoclast differentiation. Negatively regulates its own expression interacting directly with a highly conserved autoregulatory domain surrounding the transcription initiation site. Able to act as transcription factor, cannot regulate the expression of the same subset of genes than isoform 1. Does not have antiapoptotic effect on neuronal cells. The protein is POU domain, class 4, transcription factor 1 of Homo sapiens (Human).